We begin with the raw amino-acid sequence, 296 residues long: dTDP-rhamnosyl transferase RfbF (296 aa).

It belongs to the glycosyltransferase 2 family.

The protein operates within bacterial outer membrane biogenesis; lipopolysaccharide biosynthesis. This is dTDP-rhamnosyl transferase RfbF (rfbF) from Shigella flexneri.